The following is a 115-amino-acid chain: MPRPSAGSHHSDKLHVKKGDTVVVLSGKHKGKTGKVLLALPRDQKVIVEGVNLVTKHVKPSASNPQGGIEQREGALHASKVSIVDPETGKATRIRKQIVDGKKVRVAVASGKVID.

It belongs to the universal ribosomal protein uL24 family. In terms of assembly, part of the 50S ribosomal subunit.

One of two assembly initiator proteins, it binds directly to the 5'-end of the 23S rRNA, where it nucleates assembly of the 50S subunit. Functionally, one of the proteins that surrounds the polypeptide exit tunnel on the outside of the subunit. This Deinococcus deserti (strain DSM 17065 / CIP 109153 / LMG 22923 / VCD115) protein is Large ribosomal subunit protein uL24.